Consider the following 272-residue polypeptide: 2-C-methyl-D-erythritol 4-phosphate cytidylyltransferase (272 aa).

This sequence belongs to the IspD/TarI cytidylyltransferase family. IspD subfamily.

It catalyses the reaction 2-C-methyl-D-erythritol 4-phosphate + CTP + H(+) = 4-CDP-2-C-methyl-D-erythritol + diphosphate. The protein operates within isoprenoid biosynthesis; isopentenyl diphosphate biosynthesis via DXP pathway; isopentenyl diphosphate from 1-deoxy-D-xylulose 5-phosphate: step 2/6. Functionally, catalyzes the formation of 4-diphosphocytidyl-2-C-methyl-D-erythritol from CTP and 2-C-methyl-D-erythritol 4-phosphate (MEP). This chain is 2-C-methyl-D-erythritol 4-phosphate cytidylyltransferase, found in Xanthomonas oryzae pv. oryzae (strain PXO99A).